We begin with the raw amino-acid sequence, 23 residues long: Acidic phospholipase A2 CTs-A1 (23 aa).

The cofactor is Ca(2+). In terms of processing, contains 7 disulfide bonds. As to expression, expressed by the venom gland.

The protein resides in the secreted. The catalysed reaction is a 1,2-diacyl-sn-glycero-3-phosphocholine + H2O = a 1-acyl-sn-glycero-3-phosphocholine + a fatty acid + H(+). Functionally, snake venom phospholipase A2 (PLA2) that shows a moderate inhibition of ADP-induced human platelet aggregation when tested on platelet rich plasma. Exhibits moderate hydrolytic activities and prefers the anionic micelles (dPPC with deoxycholate) to the zwitterionic micelles (dPPC with Triton X-100). PLA2 catalyzes the calcium-dependent hydrolysis of the 2-acyl groups in 3-sn-phosphoglycerides. The polypeptide is Acidic phospholipase A2 CTs-A1 (Trimeresurus stejnegeri (Chinese green tree viper)).